The sequence spans 786 residues: Signal transducer and activator of transcription 5B (786 aa).

Y90 is modified (phosphotyrosine). Phosphoserine is present on S128. Residues 589 to 686 (WNDGAILGFV…EVYSKYYTPV (98 aa)) form the SH2 domain. Residues Y682 and Y699 each carry the phosphotyrosine modification.

It belongs to the transcription factor STAT family. Upon activation, forms a homodimer or a heterodimer with a related family member. Binds NR3C1. Interacts with NCOA1. Interacts with SOCS7. Interacts (via SH2 domain) with INSR. Interacts with CPEB3; this inhibits STAT5B-mediated transcriptional activation. In terms of processing, tyrosine phosphorylated in response to signaling via activated KIT, resulting in translocation to the nucleus. Tyrosine phosphorylated in response to signaling via activated FLT3; wild-type FLT3 results in much weaker phosphorylation than constitutively activated mutant FLT3. Alternatively, can be phosphorylated by JAK2. Phosphorylation at Tyr-699 by PTK6 or HCK leads to an increase of its transcriptional activity. In the virgin, found in most tissues. Particularly abundant in muscle tissue of virgin and lactating females, and of males.

The protein resides in the cytoplasm. The protein localises to the nucleus. In terms of biological role, carries out a dual function: signal transduction and activation of transcription. Mediates cellular responses to the cytokine KITLG/SCF and other growth factors. Binds to the GAS element and activates PRL-induced transcription. Positively regulates hematopoietic/erythroid differentiation. This Mus musculus (Mouse) protein is Signal transducer and activator of transcription 5B (Stat5b).